We begin with the raw amino-acid sequence, 468 residues long: Uronate isomerase (468 aa).

The protein belongs to the metallo-dependent hydrolases superfamily. Uronate isomerase family.

The enzyme catalyses D-glucuronate = D-fructuronate. It carries out the reaction aldehydo-D-galacturonate = keto-D-tagaturonate. It functions in the pathway carbohydrate metabolism; pentose and glucuronate interconversion. The sequence is that of Uronate isomerase from Endomicrobium trichonymphae.